The following is a 355-amino-acid chain: MKPSSSRASFAQRHWQHDGWLATLLRPLSALTAWHVARRRAQYQTGRRPVYRAPVPVMVIGNIYVGGTGKTPVVIATVQALRERGWTPGVISRGYGARIGPQPRVGQGRELTPASHGDEPALIAHATGAPVAVHPRRALAAQALLSQYPQVDVIVSDDGLQHLAIARDIEIAVQDDRGIGNGRLLPAGPLREPAARLDTVDAIITNRAPQSSATPTAASGQGPRRADMRLEPEAARHLQSGARRPLADFADARAFPAVAAAAGIGNPERYFATLRAAGLHPEPCLALPDHYDYRRSPFEAIVADAILVTSKDAIKCRGLDDPRLWEVPVQARLSDPGLFDWLEARLRQAAAAIAR.

64 to 71 (YVGGTGKT) serves as a coordination point for ATP. Residues 206–226 (NRAPQSSATPTAASGQGPRRA) form a disordered region. Residues 208–222 (APQSSATPTAASGQG) are compositionally biased toward low complexity.

It belongs to the LpxK family.

It carries out the reaction a lipid A disaccharide + ATP = a lipid IVA + ADP + H(+). It participates in glycolipid biosynthesis; lipid IV(A) biosynthesis; lipid IV(A) from (3R)-3-hydroxytetradecanoyl-[acyl-carrier-protein] and UDP-N-acetyl-alpha-D-glucosamine: step 6/6. In terms of biological role, transfers the gamma-phosphate of ATP to the 4'-position of a tetraacyldisaccharide 1-phosphate intermediate (termed DS-1-P) to form tetraacyldisaccharide 1,4'-bis-phosphate (lipid IVA). The chain is Tetraacyldisaccharide 4'-kinase from Bordetella petrii (strain ATCC BAA-461 / DSM 12804 / CCUG 43448).